The chain runs to 199 residues: Chaperone protein TorD (199 aa).

The protein belongs to the TorD/DmsD family. TorD subfamily.

It is found in the cytoplasm. In terms of biological role, involved in the biogenesis of TorA. Acts on TorA before the insertion of the molybdenum cofactor and, as a result, probably favors a conformation of the apoenzyme that is competent for acquiring the cofactor. The protein is Chaperone protein TorD of Escherichia coli (strain K12 / MC4100 / BW2952).